A 695-amino-acid chain; its full sequence is Probable glutamine--tRNA ligase (695 aa).

The 'HIGH' region signature appears at 201 to 211 (PEPNGILHIGH). Residues 202–204 (EPN) and 208–214 (HIGHAKA) each bind ATP. The L-glutamine site is built by Asp234 and Tyr391. Residues Thr410, 439–440 (RL), and 447–449 (LSK) each bind ATP. The short motif at 446-450 (VLSKR) is the 'KMSKS' region element.

It belongs to the class-I aminoacyl-tRNA synthetase family.

The enzyme catalyses tRNA(Gln) + L-glutamine + ATP = L-glutaminyl-tRNA(Gln) + AMP + diphosphate. The protein is Probable glutamine--tRNA ligase of Vairimorpha ceranae (strain BRL01) (Microsporidian parasite).